The following is a 309-amino-acid chain: Ribokinase (309 aa).

Substrate contacts are provided by residues 14 to 16 (NAD), 42 to 46 (GKGAN), and glutamate 143. Residues asparagine 187 and 223-228 (TLGSRG) each bind ATP. K(+) contacts are provided by aspartate 249 and isoleucine 251. Residues 254–255 (GD) and histidine 279 each bind ATP. Residue aspartate 255 coordinates substrate. The Proton acceptor role is filled by aspartate 255. Positions 285, 288, 290, and 294 each coordinate K(+).

It belongs to the carbohydrate kinase PfkB family. Ribokinase subfamily. Homodimer. The cofactor is Mg(2+).

The protein resides in the cytoplasm. The enzyme catalyses D-ribose + ATP = D-ribose 5-phosphate + ADP + H(+). It functions in the pathway carbohydrate metabolism; D-ribose degradation; D-ribose 5-phosphate from beta-D-ribopyranose: step 2/2. Its activity is regulated as follows. Activated by a monovalent cation that binds near, but not in, the active site. The most likely occupant of the site in vivo is potassium. Ion binding induces a conformational change that may alter substrate affinity. Its function is as follows. Catalyzes the phosphorylation of ribose at O-5 in a reaction requiring ATP and magnesium. The resulting D-ribose-5-phosphate can then be used either for sythesis of nucleotides, histidine, and tryptophan, or as a component of the pentose phosphate pathway. In Escherichia coli O157:H7, this protein is Ribokinase.